Reading from the N-terminus, the 336-residue chain is Aldehyde reductase AdhA (336 aa).

Cys-36, Cys-39, His-61, Cys-92, Cys-95, Cys-98, Cys-106, and Cys-148 together coordinate Zn(2+).

It belongs to the zinc-containing alcohol dehydrogenase family. In terms of assembly, homotetramer. The cofactor is Zn(2+).

It localises to the cytoplasm. It carries out the reaction a primary alcohol + NADP(+) = an aldehyde + NADPH + H(+). Its function is as follows. Active on a wide variety of primary alcohols and their corresponding aldehydes, but not against ketones nor secondary alcohols. Active on aliphatic compounds up to 5 carbons in length and aromatic alcohols, less effective on branched-chain primary alcohols. Prefers NADPH to NADH. Its catalytic efficiency is greatest for aldehydes, suggesting the reduction of aromatic and medium-chain aliphatic aldehydes is its in vivo activity. Plays a role in tolerance to internally produced ethanol. This chain is Aldehyde reductase AdhA, found in Synechocystis sp. (strain ATCC 27184 / PCC 6803 / Kazusa).